We begin with the raw amino-acid sequence, 93 residues long: Small ribosomal subunit protein uS19 (93 aa).

The disordered stretch occupies residues 73-93 (EFSPTRTYRGHDKKDKKIQKK).

The protein belongs to the universal ribosomal protein uS19 family.

Functionally, protein S19 forms a complex with S13 that binds strongly to the 16S ribosomal RNA. This is Small ribosomal subunit protein uS19 from Phytoplasma mali (strain AT).